Here is a 153-residue protein sequence, read N- to C-terminus: 6,7-dimethyl-8-ribityllumazine synthase (153 aa).

Residues F22, A56 to E58, and T80 to I82 each bind 5-amino-6-(D-ribitylamino)uracil. A (2S)-2-hydroxy-3-oxobutyl phosphate-binding site is contributed by S85–T86. H88 acts as the Proton donor in catalysis. 5-amino-6-(D-ribitylamino)uracil is bound at residue F113. R127 contacts (2S)-2-hydroxy-3-oxobutyl phosphate.

This sequence belongs to the DMRL synthase family. As to quaternary structure, forms an icosahedral capsid composed of 60 subunits, arranged as a dodecamer of pentamers.

The enzyme catalyses (2S)-2-hydroxy-3-oxobutyl phosphate + 5-amino-6-(D-ribitylamino)uracil = 6,7-dimethyl-8-(1-D-ribityl)lumazine + phosphate + 2 H2O + H(+). It functions in the pathway cofactor biosynthesis; riboflavin biosynthesis; riboflavin from 2-hydroxy-3-oxobutyl phosphate and 5-amino-6-(D-ribitylamino)uracil: step 1/2. Functionally, catalyzes the formation of 6,7-dimethyl-8-ribityllumazine by condensation of 5-amino-6-(D-ribitylamino)uracil with 3,4-dihydroxy-2-butanone 4-phosphate. This is the penultimate step in the biosynthesis of riboflavin. The protein is 6,7-dimethyl-8-ribityllumazine synthase of Actinobacillus pleuropneumoniae serotype 3 (strain JL03).